A 287-amino-acid chain; its full sequence is Lycopene elongase/hydratase (287 aa).

The next 7 membrane-spanning stretches (helical) occupy residues 15–35, 37–57, 87–107, 137–157, 166–186, 218–238, and 265–285; these read ISWI…AGEI, WLFW…MYGI, TLLW…FIFG, FIDA…GATI, MWIA…LGAV, LLAA…GIAI, and VFLW…IAIH.

Belongs to the UbiA prenyltransferase family.

The protein resides in the cell membrane. The enzyme catalyses all-trans-lycopene + dimethylallyl diphosphate + A + H2O = nonaflavuxanthin + AH2 + diphosphate. It catalyses the reaction nonaflavuxanthin + dimethylallyl diphosphate + A + H2O = flavuxanthin + AH2 + diphosphate. It participates in carotenoid biosynthesis. Catalyzes the elongation of the C(40) carotenoid all-trans-lycopene to the acyclic C(50) carotenoid flavuxanthin during decaprenoxanthin biosynthesis. Acts as a bifunctional enzyme that catalyzes the elongation of lycopene by attaching a C(5) isoprene unit at C-2, as well as the hydroxylation of the new isoprene unit. The enzyme acts at both ends of the substrate, forming the C(50) carotenoid flavuxanthin via the C(45) intermediate nonaflavuxanthin. The protein is Lycopene elongase/hydratase of Corynebacterium glutamicum (strain ATCC 13032 / DSM 20300 / JCM 1318 / BCRC 11384 / CCUG 27702 / LMG 3730 / NBRC 12168 / NCIMB 10025 / NRRL B-2784 / 534).